The sequence spans 217 residues: GTPase IMAP family member GIMD1 (217 aa).

Residues 6–217 (KMIINLALFG…ENCYQVLTFK (212 aa)) form the AIG1-type G domain. GTP-binding positions include 15–23 (GMTQSGKSS), Ser36, and 148–150 (HAE).

The protein belongs to the TRAFAC class TrmE-Era-EngA-EngB-Septin-like GTPase superfamily. AIG1/Toc34/Toc159-like paraseptin GTPase family. IAN subfamily.

The protein is GTPase IMAP family member GIMD1 (GIMD1) of Homo sapiens (Human).